A 182-amino-acid polypeptide reads, in one-letter code: UPF0316 protein lp_1140 (182 aa).

The next 3 membrane-spanning stretches (helical) occupy residues 1 to 21 (MHID…YITL), 36 to 56 (FAAF…SLVL), and 62 to 82 (PINL…GMVI).

It belongs to the UPF0316 family.

Its subcellular location is the cell membrane. In Lactiplantibacillus plantarum (strain ATCC BAA-793 / NCIMB 8826 / WCFS1) (Lactobacillus plantarum), this protein is UPF0316 protein lp_1140.